The primary structure comprises 968 residues: Catenin delta-1 (968 aa).

Met-1 carries the N-acetylmethionine modification. Residues 1–357 form a necessary and sufficient for interaction with CCDC85B region; it reads MDDSEVESTA…ASLDSLRKGG (357 aa). Ser-4 is subject to Phosphoserine. A coiled-coil region spans residues 10 to 46; the sequence is ASILASVKEQEAQFEKLTRALEEERRHVSAQLERVRV. Ser-47 is subject to Phosphoserine. Thr-59 is subject to Phosphothreonine. Tyr-112 is modified (phosphotyrosine; by FYN). Position 125 is a phosphoserine (Ser-125). Phosphotyrosine occurs at positions 217 and 221. Ser-225 bears the Phosphoserine mark. Tyr-228 carries the phosphotyrosine modification. A phosphoserine mark is found at Ser-230 and Ser-252. Tyr-257 bears the Phosphotyrosine mark. 2 positions are modified to phosphoserine: Ser-268 and Ser-269. Tyr-280 carries the post-translational modification Phosphotyrosine. Ser-288 carries the post-translational modification Phosphoserine; by PAK5. At Tyr-291 the chain carries Phosphotyrosine. The short motif at 299–306 is the Nuclear localization signal (NLS) element; sequence MSDYGTAR. Ser-300 is subject to Phosphoserine. The residue at position 304 (Thr-304) is a Phosphothreonine. A phosphoserine mark is found at Ser-320, Ser-346, Ser-349, and Ser-352. ARM repeat units follow at residues 358–395, 398–437, 441–475, and 476–516; these read PPPP…HLCY, DKVK…NISF, QDNK…ITGT, and LWNL…NEDC. Residue Lys-421 forms a Glycyl lysine isopeptide (Lys-Gly) (interchain with G-Cter in SUMO2) linkage. Lys-517 participates in a covalent cross-link: Glycyl lysine isopeptide (Lys-Gly) (interchain with G-Cter in SUMO2). The Nuclear localization signal (NLS) motif lies at 521-528; it reads IEWESVLT. ARM repeat units follow at residues 534–573, 583–624, 653–693, 700–739, 740–780, and 781–826; these read LRNV…DSDS, LRNL…AKKG, ARGY…NLCA, RYIR…NLAV, DARN…SILN, and TINE…ALVL. Ile-566, Asp-572, Ser-587, and Glu-593 each carry phosphothreonine. The short motif at 568-575 is the Nuclear localization signal (NLS) element; the sequence is QKDSDSKL. A Phosphoserine modification is found at Ser-617. The Nuclear localization signal (NLS) signature appears at 622 to 629; the sequence is KKGKDEWF. Position 713 is a phosphoserine (Ser-713). A phosphothreonine mark is found at Glu-788, Lys-794, and Asn-809. Ser-811 is modified (phosphoserine). Ser-815, Leu-835, and Lys-841 each carry phosphothreonine. Ser-847 carries the phosphoserine modification. Residues 855 to 944 are disordered; it reads NASRSQSSHS…LMQDEGQESL (90 aa). Ala-856 bears the Phosphothreonine mark. Phosphoserine is present on residues Ser-857, Ser-859, and Ser-861. Ser-862 bears the Phosphothreonine mark. A Phosphoserine modification is found at Ser-864. Residue Tyr-865 is modified to Phosphotyrosine. Ser-868 bears the Phosphoserine mark. At Thr-869 the chain carries Phosphothreonine. Basic and acidic residues predominate over residues 875-888; sequence RNQKSDKKPDREEI. Ser-879 is modified (phosphoserine). Lys-882 is covalently cross-linked (Glycyl lysine isopeptide (Lys-Gly) (interchain with G-Cter in SUMO2)). Residues Gln-889 and Ser-895 each carry the phosphothreonine modification. A compositionally biased stretch (polar residues) spans 889-908; it reads QMSNMGSNTKSLDNNYSTPN. Phosphoserine is present on Ser-899. Tyr-904 bears the Phosphotyrosine mark. Phosphothreonine occurs at positions 906, 910, and 916. Residues 909-922 show a composition bias toward basic and acidic residues; that stretch reads ERGDHNRTLDRSGD. Phosphoserine is present on residues Ser-920 and Ser-943.

This sequence belongs to the beta-catenin family. As to quaternary structure, belongs to a multiprotein cell-cell adhesion complex that also contains E-cadherin/CDH1, alpha-catenin/CTNNA1, beta-catenin/CTNNB1, and gamma-catenin/JUP. Component of a cadherin:catenin adhesion complex composed of at least of CDH26, beta-catenin/CTNNB1, alpha-catenin/CTNNA1 and p120 catenin/CTNND1. Binds to the C-terminal fragment of PSEN1 and mutually competes for CDH1. Interacts with ZBTB33. Interacts with GLIS2. Interacts with FER. Interacts with NANOS1 (via N-terminal region). Interacts (via N-terminus) with GNA12; the interaction regulates CDH1-mediated cell-cell adhesion. Interacts with GNA13. Interacts with CCDC85B. Interacts with PLPP3; negatively regulates the PLPP3-mediated stabilization of CTNNB1. Interacts with DSG3; the interaction facilitates DSG3 localization and retention at cell-cell junctions. Interacts with CTNND1/p120-catenin; the interaction controls CADH5 endocytosis. In terms of processing, phosphorylated by FER and other protein-tyrosine kinases. Phosphorylated at Ser-288 by PAK5. Dephosphorylated by PTPRJ. Expressed in vascular endothelium. Melanocytes and melanoma cells primarily express the long isoform 1A, whereas keratinocytes express shorter isoforms, especially 3A. The shortest isoform 4A, is detected in normal keratinocytes and melanocytes, and generally lost from cells derived from squamous cell carcinomas or melanomas. The C-terminal alternatively spliced exon B is present in the p120ctn transcripts in the colon, intestine and prostate, but lost in several tumor tissues derived from these organs.

It localises to the cell junction. It is found in the adherens junction. Its subcellular location is the cytoplasm. The protein localises to the nucleus. The protein resides in the cell membrane. Key regulator of cell-cell adhesion that associates with and regulates the cell adhesion properties of both C-, E- and N-cadherins, being critical for their surface stability. Promotes localization and retention of DSG3 at cell-cell junctions, via its interaction with DSG3. Beside cell-cell adhesion, regulates gene transcription through several transcription factors including ZBTB33/Kaiso2 and GLIS2, and the activity of Rho family GTPases and downstream cytoskeletal dynamics. Implicated both in cell transformation by SRC and in ligand-induced receptor signaling through the EGF, PDGF, CSF-1 and ERBB2 receptors. The chain is Catenin delta-1 from Homo sapiens (Human).